Reading from the N-terminus, the 557-residue chain is Anthrax toxin receptor-like (557 aa).

The first 25 residues, 1–25, serve as a signal peptide directing secretion; the sequence is MRSHGRWGPCFLLFLLLLPPPLFRA. Over 26 to 345 the chain is Extracellular; sequence GSLRYHGPGW…KSNVSVTSST (320 aa). In terms of domain architecture, VWFA spans 74-244; the sequence is DLYFILDKSG…KAMRDTVDAL (171 aa). The a divalent metal cation site is built by serine 82, serine 84, and threonine 148. Residues 346 to 366 traverse the membrane as a helical segment; sequence CGIFSNWLYFLLPLLLLPLLL. Topologically, residues 367–557 are cytoplasmic; that stretch reads CCLWRLCRKK…PTSKAPNTQD (191 aa). 2 disordered regions span residues 380 to 411 and 497 to 557; these read EPPPVQKPEKEPEQEKPPPPPPPSPPPPLPPP and ESPS…NTQD. The segment covering 386 to 395 has biased composition (basic and acidic residues); it reads KPEKEPEQEK. Residues 396 to 411 are compositionally biased toward pro residues; the sequence is PPPPPPPSPPPPLPPP. Positions 534–557 are enriched in polar residues; it reads GTLQNPLCPSLPRSPTSKAPNTQD.

This sequence belongs to the ATR family.

The protein localises to the membrane. The protein is Anthrax toxin receptor-like (ANTXRL) of Macaca fascicularis (Crab-eating macaque).